Here is a 671-residue protein sequence, read N- to C-terminus: Probable potassium transport system protein Kup (671 aa).

The tract at residues 1 to 43 is disordered; that stretch reads MSQIPSPNDPASTGAAPSSAAVPAGPSATPAPSPTAGFSLPGH. The span at 10 to 37 shows a compositional bias: low complexity; that stretch reads PASTGAAPSSAAVPAGPSATPAPSPTAG. A run of 12 helical transmembrane segments spans residues 52 to 72, 92 to 112, 147 to 167, 181 to 201, 209 to 229, 255 to 275, 291 to 311, 323 to 343, 381 to 401, 407 to 427, 441 to 461, and 465 to 485; these read LAAL…TSPL, VLGV…FKYM, LMLG…TPAI, PAME…LFLF, VGAV…VLGV, GWHG…GEAL, WLGL…ALLL, LLAP…AAIV, IYLP…VLGF, LASA…LLFH, AWPL…ANVV, and DGGW…STWK.

It belongs to the HAK/KUP transporter (TC 2.A.72) family.

It localises to the cell inner membrane. The catalysed reaction is K(+)(in) + H(+)(in) = K(+)(out) + H(+)(out). Transport of potassium into the cell. Likely operates as a K(+):H(+) symporter. The polypeptide is Probable potassium transport system protein Kup (Anaeromyxobacter dehalogenans (strain 2CP-1 / ATCC BAA-258)).